The chain runs to 414 residues: Adenylosuccinate synthetase (414 aa).

GTP is bound by residues 12–18 and 40–42; these read GDEGKGK and GHT. The Proton acceptor role is filled by aspartate 13. Mg(2+) is bound by residues aspartate 13 and glycine 40. IMP is bound by residues 13-16, 38-41, threonine 124, arginine 138, glutamine 216, threonine 231, and arginine 297; these read DEGK and NAGH. The active-site Proton donor is the histidine 41. Substrate is bound at residue 293–299; it reads STTGRPR. GTP contacts are provided by residues arginine 299, 325-327, and 403-405; these read KLD and STG.

It belongs to the adenylosuccinate synthetase family. As to quaternary structure, homodimer. Mg(2+) serves as cofactor.

It is found in the cytoplasm. It catalyses the reaction IMP + L-aspartate + GTP = N(6)-(1,2-dicarboxyethyl)-AMP + GDP + phosphate + 2 H(+). Its pathway is purine metabolism; AMP biosynthesis via de novo pathway; AMP from IMP: step 1/2. Its function is as follows. Plays an important role in the de novo pathway of purine nucleotide biosynthesis. Catalyzes the first committed step in the biosynthesis of AMP from IMP. This is Adenylosuccinate synthetase from Hydrogenobaculum sp. (strain Y04AAS1).